The primary structure comprises 328 residues: Tetraacyldisaccharide 4'-kinase (328 aa).

Residue 55 to 62 participates in ATP binding; the sequence is TAGGNGKT.

The protein belongs to the LpxK family.

The enzyme catalyses a lipid A disaccharide + ATP = a lipid IVA + ADP + H(+). The protein operates within glycolipid biosynthesis; lipid IV(A) biosynthesis; lipid IV(A) from (3R)-3-hydroxytetradecanoyl-[acyl-carrier-protein] and UDP-N-acetyl-alpha-D-glucosamine: step 6/6. In terms of biological role, transfers the gamma-phosphate of ATP to the 4'-position of a tetraacyldisaccharide 1-phosphate intermediate (termed DS-1-P) to form tetraacyldisaccharide 1,4'-bis-phosphate (lipid IVA). This chain is Tetraacyldisaccharide 4'-kinase, found in Escherichia coli O81 (strain ED1a).